Consider the following 905-residue polypeptide: DNA mismatch repair protein MutS (905 aa).

The tract at residues 389–410 (ERPANPEGTYPTDAETSGDTLP) is disordered. 638–645 (GPNMAGKS) is an ATP binding site. The interval 826–847 (RDAARGTNSAPSRQTLPGLDLP) is disordered. Residues 831 to 840 (GTNSAPSRQT) show a composition bias toward polar residues.

It belongs to the DNA mismatch repair MutS family.

Its function is as follows. This protein is involved in the repair of mismatches in DNA. It is possible that it carries out the mismatch recognition step. This protein has a weak ATPase activity. This is DNA mismatch repair protein MutS from Nitratidesulfovibrio vulgaris (strain ATCC 29579 / DSM 644 / CCUG 34227 / NCIMB 8303 / VKM B-1760 / Hildenborough) (Desulfovibrio vulgaris).